The following is a 960-amino-acid chain: Collagenase ColA (960 aa).

A signal peptide spans 1 to 30 (MNKNLRFTQMMIGISTMALSFGSIQTQVSA). Residues 31–92 (EETAPYNILQ…KRDEIQLKQS (62 aa)) constitute a propeptide that is removed on maturation. The segment at 93 to 365 (YTLAELNKMP…AVEQMKTNYG (273 aa)) is activator domain. The S1 metalloprotease domain stretch occupies residues 93–764 (YTLAELNKMP…VFHGVATEEK (672 aa)). Residues 375–644 (DLQKIREEGK…MQQLIDNQDK (270 aa)) are catalytic subdomain. H500 contributes to the Zn(2+) binding site. E501 is a catalytic residue. Zn(2+) is bound by residues H504 and E532. The helper subdomain stretch occupies residues 652 to 764 (NDYLIQHAPK…VFHGVATEEK (113 aa)). The PKD domain occupies 768–849 (TTIVNMNGPY…ESKEQTKVTV (82 aa)). The segment covering 836 to 845 (SRGKESKEQT) has biased composition (basic and acidic residues). Residues 836-859 (SRGKESKEQTKVTVKQDPQTSESY) are disordered. The span at 846–857 (KVTVKQDPQTSE) shows a compositional bias: polar residues. The tract at residues 852–960 (DPQTSESYEE…KNGEYSLLVK (109 aa)) is collagen-binding domain.

This sequence belongs to the peptidase M9B family. Collagenase subfamily. It depends on Ca(2+) as a cofactor. Zn(2+) serves as cofactor.

It localises to the secreted. It carries out the reaction Digestion of native collagen in the triple helical region at Xaa-|-Gly bonds. With synthetic peptides, a preference is shown for Gly at P3 and P1', Pro and Ala at P2 and P2', and hydroxyproline, Ala or Arg at P3'.. Acts as a true collagenase, which is highly active and efficiently targets native tropocollagen. In vitro, can also cleave gelatin and the synthetic peptide FALGPA (furylacryloyl-Leu-Gly-Pro-Ala). May contribute to bacterial virulence in endophthalmitis or opportunistic infections via collagen degradation in the host extracellular matrix (ECM). This is Collagenase ColA from Bacillus cereus (strain ATCC 14579 / DSM 31 / CCUG 7414 / JCM 2152 / NBRC 15305 / NCIMB 9373 / NCTC 2599 / NRRL B-3711).